Reading from the N-terminus, the 104-residue chain is Phosphoribosyl-ATP pyrophosphatase (104 aa).

Belongs to the PRA-PH family.

The protein localises to the cytoplasm. The enzyme catalyses 1-(5-phospho-beta-D-ribosyl)-ATP + H2O = 1-(5-phospho-beta-D-ribosyl)-5'-AMP + diphosphate + H(+). It participates in amino-acid biosynthesis; L-histidine biosynthesis; L-histidine from 5-phospho-alpha-D-ribose 1-diphosphate: step 2/9. The sequence is that of Phosphoribosyl-ATP pyrophosphatase from Methanocorpusculum labreanum (strain ATCC 43576 / DSM 4855 / Z).